We begin with the raw amino-acid sequence, 308 residues long: Aspartate carbamoyltransferase catalytic subunit (308 aa).

Carbamoyl phosphate-binding residues include R49 and T50. Residue K77 coordinates L-aspartate. Carbamoyl phosphate is bound by residues R99, H127, and Q130. L-aspartate is bound by residues R160 and R211. Positions 252 and 253 each coordinate carbamoyl phosphate.

The protein belongs to the aspartate/ornithine carbamoyltransferase superfamily. ATCase family. In terms of assembly, heterododecamer (2C3:3R2) of six catalytic PyrB chains organized as two trimers (C3), and six regulatory PyrI chains organized as three dimers (R2).

The catalysed reaction is carbamoyl phosphate + L-aspartate = N-carbamoyl-L-aspartate + phosphate + H(+). Its pathway is pyrimidine metabolism; UMP biosynthesis via de novo pathway; (S)-dihydroorotate from bicarbonate: step 2/3. Its function is as follows. Catalyzes the condensation of carbamoyl phosphate and aspartate to form carbamoyl aspartate and inorganic phosphate, the committed step in the de novo pyrimidine nucleotide biosynthesis pathway. In Geobacillus thermodenitrificans (strain NG80-2), this protein is Aspartate carbamoyltransferase catalytic subunit.